A 396-amino-acid chain; its full sequence is Probable intron-encoded endonuclease aI3 (396 aa).

Residues 51–90 (TNNTNNNNPADSSSYESRMRAAGNSNSNSNSNSDSNINNT) are disordered. A compositionally biased stretch (low complexity) spans 74–90 (NSNSNSNSNSDSNINNT).

Belongs to the LAGLIDADG endonuclease family.

The protein localises to the mitochondrion. In terms of biological role, mitochondrial DNA endonuclease involved in intron homing. The sequence is that of Probable intron-encoded endonuclease aI3 (aI3) from Kluyveromyces lactis (strain ATCC 8585 / CBS 2359 / DSM 70799 / NBRC 1267 / NRRL Y-1140 / WM37) (Yeast).